The following is a 630-amino-acid chain: Differentially expressed in FDCP 6 (630 aa).

Tyr-210 carries the phosphotyrosine modification. The region spanning 216 to 312 (DVLKQGYLWK…WTAAIQTAIR (97 aa)) is the PH domain. Lys-225 bears the N6-acetyllysine mark. Disordered regions lie at residues 318 to 341 (KTSL…RRRA), 378 to 418 (LQEE…ELKK), and 552 to 630 (HPIE…APGN). Basic and acidic residues-rich tracts occupy residues 331 to 341 (EQREQRERRRA) and 378 to 392 (LQEE…HKEL). Over residues 588–606 (WGSQGNRTLSVNSSEQKSL) the composition is skewed to polar residues. Ser-590 bears the Phosphoserine mark. The span at 620–630 (QEEKLDPAPGN) shows a compositional bias: basic and acidic residues.

As to quaternary structure, interacts with IRF4, activated RAC1 and F-actin. Both the phosphorylated and non-phosphorylated forms bind phosphatidylinositol 3,4,5-trisphosphate (PtdInsP3). Interacts with ZAP70. Interacts with RAB11A. Tyrosine-phosphorylated by tyrosine-protein kinase LCK in response to T-cell activation. Thymus.

It is found in the cytoplasm. The protein resides in the cell membrane. It localises to the nucleus. The protein localises to the cytoskeleton. Its subcellular location is the perinuclear region. It is found in the cell projection. The protein resides in the filopodium. Phosphatidylinositol 3,4,5-trisphosphate-dependent guanine nucleotide exchange factor (GEF) which plays a role in the activation of Rho GTPases RAC1, RhoA and CDC42. Can regulate cell morphology in cooperation with activated RAC1. Involved in immune homeostasis by ensuring proper trafficking and availability of T-cell regulator CTLA-4 at T-cell surface. Plays a role in Th2 (T helper cells) development and/or activation, perhaps by interfering with ZAP70 signaling. Required for optimal T-cell effector function, lymphocyte homeostasis and the prevention of systemic autoimmunity. The sequence is that of Differentially expressed in FDCP 6 (Def6) from Mus musculus (Mouse).